The chain runs to 92 residues: MGIFDWKHWIVILVVVVLVFGTKKLKNLGTDVGESIKGFRKAMNDDEKPADPVVNPVPPAQPVHPQATQPITERRTFDVQAEKVEEPTRKDS.

A helical membrane pass occupies residues 1 to 21 (MGIFDWKHWIVILVVVVLVFG). The disordered stretch occupies residues 44 to 92 (NDDEKPADPVVNPVPPAQPVHPQATQPITERRTFDVQAEKVEEPTRKDS). The span at 72–92 (TERRTFDVQAEKVEEPTRKDS) shows a compositional bias: basic and acidic residues.

The protein belongs to the TatA/E family. In terms of assembly, the Tat system comprises two distinct complexes: a TatABC complex, containing multiple copies of TatA, TatB and TatC subunits, and a separate TatA complex, containing only TatA subunits. Substrates initially bind to the TatABC complex, which probably triggers association of the separate TatA complex to form the active translocon.

The protein resides in the cell inner membrane. In terms of biological role, part of the twin-arginine translocation (Tat) system that transports large folded proteins containing a characteristic twin-arginine motif in their signal peptide across membranes. TatA could form the protein-conducting channel of the Tat system. The protein is Sec-independent protein translocase protein TatA of Pseudomonas fluorescens (strain SBW25).